Consider the following 326-residue polypeptide: MNTTPGTVGSDPVILATAGYDHTVRFWQAHSGICTRTVQHQDSQVNALEITPDRSMIAATGYQHIRMYDLNSNNPNPIISYDGVSKNIASVGFHEDGRWMYTGGEDCTARIWDLRSRNLQCQRIFQVNAPINCVCLHPNQAELIVGDQSGTSHIWDLKTDHNEQLIPEPEFSITSAHIDPDASYMAAVNSAGNCFVWNLTGGIGDEVTQLIPKTKIPAHTRYALQCRFSPDSTLLATCSADQTCKIWRTSNFSLMTELSIKSSNPGESSRGWMWGCAFSGDSQYIVTASSDNLARLWCVETGEIKREYGGHQKAVVCLAFNDSVLG.

Methionine 1 carries the post-translational modification N-acetylmethionine. WD repeat units lie at residues 1–37 (MNTT…CTRT), 40–80 (HQDS…PIIS), 83–122 (GVSK…LQCQ), 126–165 (QVNA…NEQL), and 168–207 (EPEF…GDEV). Residue threonine 51 is modified to Phosphothreonine. Residue lysine 86 forms a Glycyl lysine isopeptide (Lys-Gly) (interchain with G-Cter in SUMO3) linkage. Glycyl lysine isopeptide (Lys-Gly) (interchain with G-Cter in SUMO3) cross-links involve residues lysine 215, lysine 245, and lysine 261. Residues 218–257 (AHTRYALQCRFSPDSTLLATCSADQTCKIWRTSNFSLMTE) form a WD 6 repeat. Residues 268-309 (SSRGWMWGCAFSGDSQYIVTASSDNLARLWCVETGEIKREYG) form a WD 7 repeat. Lysine 305 is covalently cross-linked (Glycyl lysine isopeptide (Lys-Gly) (interchain with G-Cter in SUMO3); alternate). Residues lysine 305 and lysine 313 each participate in a glycyl lysine isopeptide (Lys-Gly) (interchain with G-Cter in ubiquitin); alternate cross-link. Residue lysine 313 forms a Glycyl lysine isopeptide (Lys-Gly) (interchain with G-Cter in SUMO1); alternate linkage.

It belongs to the WD repeat LST8 family. As to quaternary structure, part of the mechanistic target of rapamycin complex 1 (mTORC1) which contains MTOR, MLST8 and RPTOR. mTORC1 associates with AKT1S1/PRAS40, which inhibits its activity. mTORC1 binds to and is inhibited by FKBP12-rapamycin. Within mTORC1, interacts directly with MTOR and RPTOR. Component of the mechanistic target of rapamycin complex 2 (mTORC2), consisting in two heterotretramers composed of MTOR, MLST8, RICTOR and MAPKAP1/SIN1. Contrary to mTORC1, mTORC2 does not bind to and is not sensitive to FKBP12-rapamycin. mTORC1 and mTORC2 associate with DEPTOR, which regulates their activity. Interacts with RHEB. Interacts with MEAK7. Interacts with SIK3. Interacts with SLC38A7; this interaction promotes the recruitment of mTORC1 to the lysosome and its subsequent activation. In terms of processing, phosphorylation at Thr-51 by CDK1 promotes ubiquitination by the SCF(FBXW7) complex, followed by degradation. Ubiquitination by the SCF(FBXW7) and SCF(FBXW11) complexes following phosphorylation at Thr-51 by CDK1, leads to its degradation by the proteasome. Ubiquitination at Lys-305 and Lys-313 by TRAF2 via 'Lys-63'-linked polyubiquitin chains inhibits formation of the mTORC2 complex, while promoting formation of the mTORC1 complex: ubiquitination disrupts the interaction between MLST8 and MAPKAP1/SIN1 to favor mTORC1 assembly. Deubiquitination at Lys-305 and Lys-313 by OTUD7B promotes MLST8 interaction with MAPKAP1/SIN1, facilitating mTORC2 assembly. Post-translationally, sumoylation with SUMO1, SUMO2 and SUMO3 promotes assembly of both mTORC1 and mTORC2 complexes. Expressed at highest levels in the brain and testis, followed by lung, heart, kidney, skeletal muscle, spleen and liver. Also expressed in epididymal, abdominal and brown fat, small intestine and pancreas.

Its subcellular location is the lysosome membrane. The protein localises to the cytoplasm. Its function is as follows. Subunit of both mTORC1 and mTORC2, which regulates cell growth and survival in response to nutrient and hormonal signals. mTORC1 is activated in response to growth factors or amino acids. In response to nutrients, mTORC1 is recruited to the lysosome membrane and promotes protein, lipid and nucleotide synthesis by phosphorylating several substrates, such as ribosomal protein S6 kinase (RPS6KB1 and RPS6KB2) and EIF4EBP1 (4E-BP1). In the same time, it inhibits catabolic pathways by phosphorylating the autophagy initiation components ULK1 and ATG13, as well as transcription factor TFEB, a master regulators of lysosomal biogenesis and autophagy. The mTORC1 complex is inhibited in response to starvation and amino acid depletion. Within mTORC1, MLST8 interacts directly with MTOR and enhances its kinase activity. In nutrient-poor conditions, stabilizes the MTOR-RPTOR interaction and favors RPTOR-mediated inhibition of MTOR activity. As part of the mTORC2 complex, transduces signals from growth factors to pathways involved in proliferation, cytoskeletal organization, lipogenesis and anabolic output. mTORC2 is also activated by growth factors, but seems to be nutrient-insensitive. In response to growth factors, mTORC2 phosphorylates and activates AGC protein kinase family members, including AKT (AKT1, AKT2 and AKT3), PKC (PRKCA, PRKCB and PRKCE) and SGK1. mTORC2 functions upstream of Rho GTPases to regulate the actin cytoskeleton, probably by activating one or more Rho-type guanine nucleotide exchange factors. mTORC2 promotes the serum-induced formation of stress-fibers or F-actin. mTORC2 plays a critical role in AKT1 activation by mediating phosphorylation of different sites depending on the context, such as 'Thr-450', 'Ser-473', 'Ser-477' or 'Thr-479', facilitating the phosphorylation of the activation loop of AKT1 on 'Thr-308' by PDPK1/PDK1 which is a prerequisite for full activation. mTORC2 regulates the phosphorylation of SGK1 at 'Ser-422'. mTORC2 also modulates the phosphorylation of PRKCA on 'Ser-657'. Within mTORC2, MLST8 acts as a bridge between MAPKAP1/SIN1 and MTOR. In Rattus norvegicus (Rat), this protein is Target of rapamycin complex subunit LST8.